The sequence spans 497 residues: ATP synthase subunit alpha, chloroplastic (497 aa).

170–177 lines the ATP pocket; it reads GDRQTGKT.

Belongs to the ATPase alpha/beta chains family. In terms of assembly, F-type ATPases have 2 components, CF(1) - the catalytic core - and CF(0) - the membrane proton channel. CF(1) has five subunits: alpha(3), beta(3), gamma(1), delta(1), epsilon(1). CF(0) has four main subunits: a, b, b' and c.

Its subcellular location is the plastid. The protein resides in the chloroplast thylakoid membrane. It catalyses the reaction ATP + H2O + 4 H(+)(in) = ADP + phosphate + 5 H(+)(out). Functionally, produces ATP from ADP in the presence of a proton gradient across the membrane. The alpha chain is a regulatory subunit. This Bigelowiella natans (Pedinomonas minutissima) protein is ATP synthase subunit alpha, chloroplastic.